We begin with the raw amino-acid sequence, 93 residues long: Small ribosomal subunit protein uS19 (93 aa).

Belongs to the universal ribosomal protein uS19 family.

Functionally, protein S19 forms a complex with S13 that binds strongly to the 16S ribosomal RNA. The protein is Small ribosomal subunit protein uS19 (rpsS) of Mycobacterium leprae (strain TN).